Reading from the N-terminus, the 58-residue chain is U11-ctenitoxin-Pn1b (58 aa).

5 disulfides stabilise this stretch: Cys2–Cys16, Cys9–Cys22, Cys15–Cys40, Cys24–Cys38, and Cys48–Cys55.

In terms of tissue distribution, expressed by the venom gland.

Its subcellular location is the secreted. Functionally, non-toxic to mice. The sequence is that of U11-ctenitoxin-Pn1b from Phoneutria nigriventer (Brazilian armed spider).